A 312-amino-acid polypeptide reads, in one-letter code: Methionyl-tRNA formyltransferase (312 aa).

109–112 (SLLP) contacts (6S)-5,6,7,8-tetrahydrofolate.

It belongs to the Fmt family.

The enzyme catalyses L-methionyl-tRNA(fMet) + (6R)-10-formyltetrahydrofolate = N-formyl-L-methionyl-tRNA(fMet) + (6S)-5,6,7,8-tetrahydrofolate + H(+). In terms of biological role, attaches a formyl group to the free amino group of methionyl-tRNA(fMet). The formyl group appears to play a dual role in the initiator identity of N-formylmethionyl-tRNA by promoting its recognition by IF2 and preventing the misappropriation of this tRNA by the elongation apparatus. The chain is Methionyl-tRNA formyltransferase from Anaeromyxobacter dehalogenans (strain 2CP-C).